A 368-amino-acid chain; its full sequence is Serine/threonine-protein kinase CAK1 (368 aa).

Positions 1–368 constitute a Protein kinase domain; that stretch reads MKLDSIDITH…QRILQELEKP (368 aa). The active-site Proton acceptor is D156.

Belongs to the protein kinase superfamily. CMGC Ser/Thr protein kinase family. CDC2/CDKX subfamily.

The catalysed reaction is L-seryl-[protein] + ATP = O-phospho-L-seryl-[protein] + ADP + H(+). It catalyses the reaction L-threonyl-[protein] + ATP = O-phospho-L-threonyl-[protein] + ADP + H(+). This is Serine/threonine-protein kinase CAK1 (CAK1) from Saccharomyces cerevisiae (strain ATCC 204508 / S288c) (Baker's yeast).